Reading from the N-terminus, the 1562-residue chain is Pikromycin polyketide synthase component PikAIII (1562 aa).

Positions 34–464 (HEPVAIVGMA…GTNAHVVLEE (431 aa)) constitute a Ketosynthase family 3 (KS3) domain. Residues 37–1475 (VAIVGMACRL…TPAALAAHLH (1439 aa)) are module 5. Catalysis depends on C209, which acts as the Acyl-thioester intermediate; for beta-ketoacyl synthase activity. Active-site for beta-ketoacyl synthase activity residues include H344 and H384. The tract at residues 565–866 (FVFPGQGTQW…GGQERLVTSL (302 aa)) is acyltransferase. S655 functions as the Acyl-ester intermediate; for acyltransferase activity in the catalytic mechanism. The beta-ketoacyl reductase stretch occupies residues 1116 to 1293 (GTVLITGGTG…ATSVAWGLWA (178 aa)). Residues 1124-1127 (TGAL), 1147-1150 (SRSG), 1176-1177 (DV), K1226, and 1248-1249 (YS) contribute to the NADP(+) site. Y1263 acts as the Acyl-ester intermediate; for beta-ketoacyl reductase activity in catalysis. The Carrier domain occupies 1403–1478 (PALLTLVRTH…ALAAHLHEAY (76 aa)). Position 1438 is an O-(pantetheine 4'-phosphoryl)serine (S1438). Positions 1519–1548 (GIEPEPGSGGSDGGAADPGAEPEASIDDLD) are disordered. A compositionally biased stretch (low complexity) spans 1532-1541 (GAADPGAEPE).

As to quaternary structure, homodimer. Pikromycin PKS consists of a combination of multimodular (PikAI and PikAII) and monomodular (PikAIII and PikAIV) polypeptides each coding for a functional synthase subunit which participates in 1 (monomodular) or 2 (multimodular) of the six FAS-like elongation steps required for formation of the polyketide. Module 1, 2, 3, 4, 5, and 6 participating in biosynthesis steps 1, 2, 3, 4, 5, and 6, respectively. Requires pantetheine 4'-phosphate as cofactor.

It carries out the reaction 5 (S)-methylmalonyl-CoA + malonyl-CoA + 5 NADPH + 11 H(+) = 10-deoxymethynolide + 6 CO2 + 5 NADP(+) + 6 CoA + 2 H2O. The enzyme catalyses 6 (S)-methylmalonyl-CoA + malonyl-CoA + 5 NADPH + 12 H(+) = narbonolide + 7 CO2 + 5 NADP(+) + 7 CoA + 2 H2O. It participates in antibiotic biosynthesis. Involved in the biosynthesis of 12- and 14-membered ring macrolactone antibiotics such as methymycin and neomethymycin, and pikromycin and narbomycin, respectively. Component of the pikromycin PKS which catalyzes the biosynthesis of both precursors 10-deoxymethynolide (12-membered ring macrolactone) and narbonolide (14-membered ring macrolactone). Chain elongation through PikAI, PikAII and PikAIII followed by thioesterase catalyzed termination results in the production of 10-deoxymethynolide, while continued elongation through PikAIV, followed by thioesterase (TE) catalyzed cyclization results in the biosynthesis of the narbonolide. The polypeptide is Pikromycin polyketide synthase component PikAIII (Streptomyces venezuelae).